Consider the following 148-residue polypeptide: PTS system fructose-like EIIA component (148 aa).

A PTS EIIA type-2 domain is found at 2 to 145 (AALTASCIDL…DQVLALLNQT (144 aa)). The active-site Tele-phosphohistidine intermediate is the His64. His64 bears the Phosphohistidine; by HPr mark.

The protein resides in the cytoplasm. The phosphoenolpyruvate-dependent sugar phosphotransferase system (sugar PTS), a major carbohydrate active transport system, catalyzes the phosphorylation of incoming sugar substrates concomitantly with their translocation across the cell membrane. The enzyme II FrvAB PTS system is involved in fructose transport. This chain is PTS system fructose-like EIIA component, found in Escherichia coli (strain K12).